We begin with the raw amino-acid sequence, 90 residues long: NAD(P)H-quinone oxidoreductase subunit H, chloroplastic (90 aa).

This sequence belongs to the complex I 49 kDa subunit family. NDH is composed of at least 16 different subunits, 5 of which are encoded in the nucleus.

The protein localises to the plastid. Its subcellular location is the chloroplast thylakoid membrane. The enzyme catalyses a plastoquinone + NADH + (n+1) H(+)(in) = a plastoquinol + NAD(+) + n H(+)(out). The catalysed reaction is a plastoquinone + NADPH + (n+1) H(+)(in) = a plastoquinol + NADP(+) + n H(+)(out). In terms of biological role, NDH shuttles electrons from NAD(P)H:plastoquinone, via FMN and iron-sulfur (Fe-S) centers, to quinones in the photosynthetic chain and possibly in a chloroplast respiratory chain. The immediate electron acceptor for the enzyme in this species is believed to be plastoquinone. Couples the redox reaction to proton translocation, and thus conserves the redox energy in a proton gradient. The protein is NAD(P)H-quinone oxidoreductase subunit H, chloroplastic (ndhH) of Secale cereale (Rye).